The following is a 347-amino-acid chain: NADH-ubiquinone oxidoreductase chain 2 (347 aa).

Transmembrane regions (helical) follow at residues 3–23 (PIVF…VMMS), 25–45 (HWLM…PILM), 59–79 (YFLT…INLM), 111–131 (FHFW…LILL), 149–169 (INLD…GWGG), 178–198 (IMAY…TYNP), 201–221 (TMLN…LLML), 242–262 (SLIL…GFIP), 274–294 (NSII…YFYL), and 325–345 (LLPT…TMSI).

The protein belongs to the complex I subunit 2 family. As to quaternary structure, core subunit of respiratory chain NADH dehydrogenase (Complex I) which is composed of 45 different subunits. Interacts with TMEM242.

The protein resides in the mitochondrion inner membrane. The catalysed reaction is a ubiquinone + NADH + 5 H(+)(in) = a ubiquinol + NAD(+) + 4 H(+)(out). Functionally, core subunit of the mitochondrial membrane respiratory chain NADH dehydrogenase (Complex I) which catalyzes electron transfer from NADH through the respiratory chain, using ubiquinone as an electron acceptor. Essential for the catalytic activity and assembly of complex I. The chain is NADH-ubiquinone oxidoreductase chain 2 from Rhinoceros unicornis (Greater Indian rhinoceros).